The chain runs to 161 residues: Mediator of RNA polymerase II transcription subunit 10 (161 aa).

It belongs to the Mediator complex subunit 10 family. In terms of assembly, component of the Mediator complex.

It localises to the nucleus. In terms of biological role, component of the Mediator complex, a coactivator involved in the regulated transcription of nearly all RNA polymerase II-dependent genes. Mediator functions as a bridge to convey information from gene-specific regulatory proteins to the basal RNA polymerase II transcription machinery. Mediator is recruited to promoters by direct interactions with regulatory proteins and serves as a scaffold for the assembly of a functional preinitiation complex with RNA polymerase II and the general transcription factors. The sequence is that of Mediator of RNA polymerase II transcription subunit 10 (NUT2) from Kluyveromyces lactis (strain ATCC 8585 / CBS 2359 / DSM 70799 / NBRC 1267 / NRRL Y-1140 / WM37) (Yeast).